Here is a 96-residue protein sequence, read N- to C-terminus: Protein RnfH (96 aa).

This sequence belongs to the UPF0125 (RnfH) family.

In Psychromonas ingrahamii (strain DSM 17664 / CCUG 51855 / 37), this protein is Protein RnfH.